Here is a 1207-residue protein sequence, read N- to C-terminus: DNA-directed RNA polymerase subunit beta' (1207 aa).

4 residues coordinate Zn(2+): Cys60, Cys62, Cys75, and Cys78. Residues Asp449, Asp451, and Asp453 each contribute to the Mg(2+) site. Cys822, Cys896, Cys903, and Cys906 together coordinate Zn(2+).

This sequence belongs to the RNA polymerase beta' chain family. The RNAP catalytic core consists of 2 alpha, 1 beta, 1 beta' and 1 omega subunit. When a sigma factor is associated with the core the holoenzyme is formed, which can initiate transcription. It depends on Mg(2+) as a cofactor. Requires Zn(2+) as cofactor.

The catalysed reaction is RNA(n) + a ribonucleoside 5'-triphosphate = RNA(n+1) + diphosphate. Functionally, DNA-dependent RNA polymerase catalyzes the transcription of DNA into RNA using the four ribonucleoside triphosphates as substrates. The chain is DNA-directed RNA polymerase subunit beta' from Staphylococcus aureus (strain USA300).